The sequence spans 61 residues: Small ribosomal subunit protein uS14B (61 aa).

Zn(2+) contacts are provided by cysteine 24, cysteine 27, cysteine 40, and cysteine 43.

It belongs to the universal ribosomal protein uS14 family. Zinc-binding uS14 subfamily. Part of the 30S ribosomal subunit. Contacts proteins S3 and S10. Zn(2+) serves as cofactor.

Binds 16S rRNA, required for the assembly of 30S particles and may also be responsible for determining the conformation of the 16S rRNA at the A site. The sequence is that of Small ribosomal subunit protein uS14B from Streptococcus pyogenes serotype M6 (strain ATCC BAA-946 / MGAS10394).